The sequence spans 362 residues: UDP-N-acetylglucosamine--N-acetylmuramyl-(pentapeptide) pyrophosphoryl-undecaprenol N-acetylglucosamine transferase (362 aa).

UDP-N-acetyl-alpha-D-glucosamine is bound by residues 14–16 (TGG), arginine 170, serine 199, and glutamine 289.

This sequence belongs to the glycosyltransferase 28 family. MurG subfamily.

It localises to the cell inner membrane. It carries out the reaction di-trans,octa-cis-undecaprenyl diphospho-N-acetyl-alpha-D-muramoyl-L-alanyl-D-glutamyl-meso-2,6-diaminopimeloyl-D-alanyl-D-alanine + UDP-N-acetyl-alpha-D-glucosamine = di-trans,octa-cis-undecaprenyl diphospho-[N-acetyl-alpha-D-glucosaminyl-(1-&gt;4)]-N-acetyl-alpha-D-muramoyl-L-alanyl-D-glutamyl-meso-2,6-diaminopimeloyl-D-alanyl-D-alanine + UDP + H(+). Its pathway is cell wall biogenesis; peptidoglycan biosynthesis. Functionally, cell wall formation. Catalyzes the transfer of a GlcNAc subunit on undecaprenyl-pyrophosphoryl-MurNAc-pentapeptide (lipid intermediate I) to form undecaprenyl-pyrophosphoryl-MurNAc-(pentapeptide)GlcNAc (lipid intermediate II). The chain is UDP-N-acetylglucosamine--N-acetylmuramyl-(pentapeptide) pyrophosphoryl-undecaprenol N-acetylglucosamine transferase from Borrelia turicatae (strain 91E135).